A 228-amino-acid chain; its full sequence is Lipoprotein-releasing system ATP-binding protein LolD (228 aa).

The ABC transporter domain occupies leucine 9–arginine 228. Glycine 44–serine 51 contacts ATP.

This sequence belongs to the ABC transporter superfamily. Lipoprotein translocase (TC 3.A.1.125) family. As to quaternary structure, the complex is composed of two ATP-binding proteins (LolD) and two transmembrane proteins (LolC and LolE).

Its subcellular location is the cell inner membrane. In terms of biological role, part of the ABC transporter complex LolCDE involved in the translocation of mature outer membrane-directed lipoproteins, from the inner membrane to the periplasmic chaperone, LolA. Responsible for the formation of the LolA-lipoprotein complex in an ATP-dependent manner. The chain is Lipoprotein-releasing system ATP-binding protein LolD from Protochlamydia amoebophila (strain UWE25).